The primary structure comprises 471 residues: Light-independent protochlorophyllide reductase subunit N (471 aa).

3 residues coordinate [4Fe-4S] cluster: C22, C47, and C107.

The protein belongs to the BchN/ChlN family. Protochlorophyllide reductase is composed of three subunits; ChlL, ChlN and ChlB. Forms a heterotetramer of two ChlB and two ChlN subunits. The cofactor is [4Fe-4S] cluster.

It localises to the plastid. The protein localises to the chloroplast. It catalyses the reaction chlorophyllide a + oxidized 2[4Fe-4S]-[ferredoxin] + 2 ADP + 2 phosphate = protochlorophyllide a + reduced 2[4Fe-4S]-[ferredoxin] + 2 ATP + 2 H2O. The protein operates within porphyrin-containing compound metabolism; chlorophyll biosynthesis (light-independent). Component of the dark-operative protochlorophyllide reductase (DPOR) that uses Mg-ATP and reduced ferredoxin to reduce ring D of protochlorophyllide (Pchlide) to form chlorophyllide a (Chlide). This reaction is light-independent. The NB-protein (ChlN-ChlB) is the catalytic component of the complex. This Anthoceros angustus (Hornwort) protein is Light-independent protochlorophyllide reductase subunit N.